Reading from the N-terminus, the 408-residue chain is Arginine biosynthesis bifunctional protein ArgJ (408 aa).

Residues threonine 156, lysine 182, threonine 193, glutamate 279, asparagine 403, and serine 408 each coordinate substrate. Threonine 193 acts as the Nucleophile in catalysis.

This sequence belongs to the ArgJ family. In terms of assembly, heterotetramer of two alpha and two beta chains.

It is found in the cytoplasm. The enzyme catalyses N(2)-acetyl-L-ornithine + L-glutamate = N-acetyl-L-glutamate + L-ornithine. It catalyses the reaction L-glutamate + acetyl-CoA = N-acetyl-L-glutamate + CoA + H(+). It participates in amino-acid biosynthesis; L-arginine biosynthesis; L-ornithine and N-acetyl-L-glutamate from L-glutamate and N(2)-acetyl-L-ornithine (cyclic): step 1/1. The protein operates within amino-acid biosynthesis; L-arginine biosynthesis; N(2)-acetyl-L-ornithine from L-glutamate: step 1/4. Catalyzes two activities which are involved in the cyclic version of arginine biosynthesis: the synthesis of N-acetylglutamate from glutamate and acetyl-CoA as the acetyl donor, and of ornithine by transacetylation between N(2)-acetylornithine and glutamate. The polypeptide is Arginine biosynthesis bifunctional protein ArgJ (Dechloromonas aromatica (strain RCB)).